A 182-amino-acid chain; its full sequence is Probable chorismate pyruvate-lyase (182 aa).

The substrate site is built by Arg81, Leu119, and Glu171.

Belongs to the UbiC family.

It is found in the cytoplasm. It catalyses the reaction chorismate = 4-hydroxybenzoate + pyruvate. The protein operates within cofactor biosynthesis; ubiquinone biosynthesis. Functionally, removes the pyruvyl group from chorismate, with concomitant aromatization of the ring, to provide 4-hydroxybenzoate (4HB) for the ubiquinone pathway. The sequence is that of Probable chorismate pyruvate-lyase from Pseudomonas putida (Arthrobacter siderocapsulatus).